We begin with the raw amino-acid sequence, 725 residues long: Phosphoribosylformylglycinamidine synthase subunit PurL (725 aa).

Residue His41 is part of the active site. 2 residues coordinate ATP: Tyr44 and Lys83. Position 85 (Glu85) interacts with Mg(2+). Substrate-binding positions include 86-89 (SHNH) and Arg108. Catalysis depends on His87, which acts as the Proton acceptor. Residue Asp109 coordinates Mg(2+). Residue Gln231 participates in substrate binding. Position 259 (Asp259) interacts with Mg(2+). A substrate-binding site is contributed by 303–305 (ESQ). Positions 485 and 522 each coordinate ATP. Mg(2+) is bound at residue Asn523. Ser525 is a binding site for substrate.

The protein belongs to the FGAMS family. In terms of assembly, monomer. Part of the FGAM synthase complex composed of 1 PurL, 1 PurQ and 2 PurS subunits.

The protein localises to the cytoplasm. It carries out the reaction N(2)-formyl-N(1)-(5-phospho-beta-D-ribosyl)glycinamide + L-glutamine + ATP + H2O = 2-formamido-N(1)-(5-O-phospho-beta-D-ribosyl)acetamidine + L-glutamate + ADP + phosphate + H(+). The protein operates within purine metabolism; IMP biosynthesis via de novo pathway; 5-amino-1-(5-phospho-D-ribosyl)imidazole from N(2)-formyl-N(1)-(5-phospho-D-ribosyl)glycinamide: step 1/2. In terms of biological role, part of the phosphoribosylformylglycinamidine synthase complex involved in the purines biosynthetic pathway. Catalyzes the ATP-dependent conversion of formylglycinamide ribonucleotide (FGAR) and glutamine to yield formylglycinamidine ribonucleotide (FGAM) and glutamate. The FGAM synthase complex is composed of three subunits. PurQ produces an ammonia molecule by converting glutamine to glutamate. PurL transfers the ammonia molecule to FGAR to form FGAM in an ATP-dependent manner. PurS interacts with PurQ and PurL and is thought to assist in the transfer of the ammonia molecule from PurQ to PurL. The sequence is that of Phosphoribosylformylglycinamidine synthase subunit PurL from Thermus thermophilus (strain ATCC BAA-163 / DSM 7039 / HB27).